The sequence spans 203 residues: Synaptosomal-associated protein 25-B (203 aa).

A compositionally biased stretch (basic and acidic residues) spans 1-11 (MADEADMRNEL). The disordered stretch occupies residues 1-25 (MADEADMRNELTDMQARADQLGDES). T-SNARE coiled-coil homology domains lie at 19 to 81 (DQLG…LTDL) and 137 to 199 (DARE…ATKM).

The protein belongs to the SNAP-25 family.

It localises to the synapse. It is found in the synaptosome. Its subcellular location is the cell membrane. May play an important role in the synaptic function of specific neuronal systems. Associates with proteins involved in vesicle docking and membrane fusion. This is Synaptosomal-associated protein 25-B (snap25b) from Carassius auratus (Goldfish).